The following is a 326-amino-acid chain: MEAQNQEVAALVEKIAGLHAAISKLPSLSPSAEVDALFTDLVTACVPASPVDVAKLGPEAQAMREELIRLCSAAEGHLEAHYADMLAAFDNPLDHLARFPYYGNYVNLSKLEYDLLVRYVPGIAPTRVAFVGSGPLPFSSLVLAAHHLPDAVFDNYDRCGAANERARRLFRGADEGLGARMAFHTADVATLTGELGAYDVVFLAALVGMAAEEKAGVIAHLGAHMADGAALVVSARHGARGFLYPIVDLEDIRRGGFDVLAVYHPDDEVINSVIVARKADPRRGGGLAGARGAVPVVSPPCKCCKMEAAAGAFQKAEEFAAKRLSV.

The protein belongs to the nicotianamine synthase (NAS)-like family. In terms of tissue distribution, expressed in roots.

It catalyses the reaction 3 S-adenosyl-L-methionine = nicotianamine + 3 S-methyl-5'-thioadenosine + 3 H(+). Functionally, synthesizes nicotianamine, a polyamine that is the first intermediate in the synthesis of the phytosiderophores of the mugineic acid type found in gramineae which serve as a sensor for the physiological iron status within the plant, and/or might be involved in the transport of iron. In Oryza sativa subsp. indica (Rice), this protein is Nicotianamine synthase 2 (NAS2).